The sequence spans 102 residues: MQKARIRLSGTDFEKIEMVCDRIKEIAERTGVNLAGPIPLPTKKLVVPTRKSPDGEGTATWDRWQMRVHKRLIDIDADERALRQLMRIQVPKDIGIEIVLES.

Belongs to the universal ribosomal protein uS10 family. As to quaternary structure, part of the 30S ribosomal subunit.

Involved in the binding of tRNA to the ribosomes. The polypeptide is Small ribosomal subunit protein uS10 (Methanoculleus marisnigri (strain ATCC 35101 / DSM 1498 / JR1)).